We begin with the raw amino-acid sequence, 135 residues long: Large ribosomal subunit protein uL18 (135 aa).

The segment at 1-23 (MSQTANQKAKRIPLGKDASTKRR) is disordered.

This sequence belongs to the universal ribosomal protein uL18 family. As to quaternary structure, part of the 50S ribosomal subunit; part of the 5S rRNA/L5/L18/L25 subcomplex. Contacts the 5S and 23S rRNAs.

Its function is as follows. This is one of the proteins that bind and probably mediate the attachment of the 5S RNA into the large ribosomal subunit, where it forms part of the central protuberance. The protein is Large ribosomal subunit protein uL18 of Rhodococcus jostii (strain RHA1).